Here is a 414-residue protein sequence, read N- to C-terminus: Apolipoprotein N-acyltransferase (414 aa).

6 helical membrane-spanning segments follow: residues 19-39 (GIAL…HFGI), 40-60 (TSPL…LKLP), 63-83 (SGFA…ALSF), 91-111 (LIPF…SMAL), 121-141 (LLLW…VPEV), and 153-173 (LSFG…QRWL). Residues 202–414 (IETHIPQEIR…NRSPSGIIAP (213 aa)) form the CN hydrolase domain. E243 acts as the Proton acceptor in catalysis. K298 is a catalytic residue. Catalysis depends on C351, which acts as the Nucleophile.

Belongs to the CN hydrolase family. Apolipoprotein N-acyltransferase subfamily.

The protein resides in the cell inner membrane. The enzyme catalyses N-terminal S-1,2-diacyl-sn-glyceryl-L-cysteinyl-[lipoprotein] + a glycerophospholipid = N-acyl-S-1,2-diacyl-sn-glyceryl-L-cysteinyl-[lipoprotein] + a 2-acyl-sn-glycero-3-phospholipid + H(+). It participates in protein modification; lipoprotein biosynthesis (N-acyl transfer). Catalyzes the phospholipid dependent N-acylation of the N-terminal cysteine of apolipoprotein, the last step in lipoprotein maturation. This chain is Apolipoprotein N-acyltransferase, found in Wolinella succinogenes (strain ATCC 29543 / DSM 1740 / CCUG 13145 / JCM 31913 / LMG 7466 / NCTC 11488 / FDC 602W) (Vibrio succinogenes).